The following is a 282-amino-acid chain: 4-deoxy-L-threo-5-hexosulose-uronate ketol-isomerase 2 (282 aa).

4 residues coordinate Zn(2+): His-200, His-202, Glu-207, and His-249.

This sequence belongs to the KduI family. Requires Zn(2+) as cofactor.

The catalysed reaction is 5-dehydro-4-deoxy-D-glucuronate = 3-deoxy-D-glycero-2,5-hexodiulosonate. Its pathway is glycan metabolism; pectin degradation; 2-dehydro-3-deoxy-D-gluconate from pectin: step 4/5. Its function is as follows. Catalyzes the isomerization of 5-dehydro-4-deoxy-D-glucuronate to 3-deoxy-D-glycero-2,5-hexodiulosonate. This Rhizobium meliloti (strain 1021) (Ensifer meliloti) protein is 4-deoxy-L-threo-5-hexosulose-uronate ketol-isomerase 2 (kduI2).